The following is a 582-amino-acid chain: MSSDDQFTSIQWDRDELGPNKETKVNKQETITEDDEHHNNDNEDKDNDTTKSNEPENIQEDDETKDDNEPTDSLILSKTGDENISNIESQNEGDHIVGEPDVNQEPSSDSQTEAYEINVVVTSPLRDLDSSSKPYISYLLTTATNHPSVMKLSTVKKEQGKEVVEITARRRYGDFRFLFDCLSNDHPEVMMPPLPSKSNFKYLTGDTFSTEFVHKRLHSLDRFVRFITCHKVLSQSSIFHLFVSDSADWSTFQKNLKISKVGVQESDADKGNSSMTSNVVNKVVNEDLLTETIMNFLTPSKHKRETNKEILEISDKLKKLYENLIKLDKIFTKLNKKNHDLSVDYEQFSQQIMKLSVIQNSSDETNEPTTPEINEQKQFATNFKVFASSLSYFSDNWSNLHKYIDESFLVSLKDCAKYIISLTNLIELQHNKKIDLQVLQDYLNKAKSELQGLGGSHNAPPNPIITHNNGGIVNNTTQLIRDTLSTSATPNIGSSVTESKVTKLQNRITELENEISVQSQLVLDLTNKIINEEYPNWDKFNKIELKESLLGLCNEEISFYKGLVDNWSDIELKLLKRLDELK.

Over residues 1–11 (MSSDDQFTSIQ) the composition is skewed to polar residues. The disordered stretch occupies residues 1–111 (MSSDDQFTSI…VNQEPSSDSQ (111 aa)). Composition is skewed to basic and acidic residues over residues 12 to 27 (WDRD…KVNK) and 35 to 54 (DEHH…KSNE). Acidic residues predominate over residues 57–70 (NIQEDDETKDDNEP). In terms of domain architecture, PX spans 116–249 (EINVVVTSPL…HLFVSDSADW (134 aa)). Residues Arg171, Lys197, and Arg216 each contribute to the a 1,2-diacyl-sn-glycero-3-phospho-(1D-myo-inositol-3-phosphate) site. Coiled coils occupy residues 300–329 (SKHK…KLDK) and 494–529 (SSVT…TNKI).

This sequence belongs to the sorting nexin family.

It is found in the cytoplasm. It localises to the cytosol. The protein resides in the preautophagosomal structure membrane. The protein localises to the endosome membrane. In terms of biological role, sorting nexin, involved in the separation or division of vacuoles throughout the entire life cycle of the cells. Involved in retrieval of late-Golgi SNAREs from post-Golgi endosomes to the trans-Golgi network, for cytoplasm to vacuole transport (Cvt), and autophagy of large cargos including mitophagy, pexophagy and glycophagy. This chain is Sorting nexin-4 (SNX4), found in Debaryomyces hansenii (strain ATCC 36239 / CBS 767 / BCRC 21394 / JCM 1990 / NBRC 0083 / IGC 2968) (Yeast).